A 1032-amino-acid polypeptide reads, in one-letter code: Beta-galactosidase (1032 aa).

2 residues coordinate substrate: Asn-100 and Asp-198. Asp-198 lines the Na(+) pocket. Mg(2+) is bound by residues Glu-413, His-415, and Glu-458. Substrate contacts are provided by residues Glu-458 and 534–537; that span reads EYAH. Glu-458 (proton donor) is an active-site residue. Glu-534 functions as the Nucleophile in the catalytic mechanism. Asn-594 contributes to the Mg(2+) binding site. 2 residues coordinate Na(+): Phe-598 and Asn-601. Residues Asn-601 and Trp-1006 each coordinate substrate.

Belongs to the glycosyl hydrolase 2 family. As to quaternary structure, homotetramer. Mg(2+) serves as cofactor. Na(+) is required as a cofactor.

The catalysed reaction is Hydrolysis of terminal non-reducing beta-D-galactose residues in beta-D-galactosides.. The chain is Beta-galactosidase from Vibrio vulnificus (strain CMCP6).